Reading from the N-terminus, the 170-residue chain is Fimbrial protein (170 aa).

Residues 1 to 7 (MNTLQKG) constitute a propeptide, leader sequence. Phenylalanine 8 is subject to N-methylphenylalanine. The helical transmembrane segment at 8–28 (FTLIELMIVIAIVGILAAVAL) threads the bilayer. O-linked (Gal...) serine glycosylation occurs at serine 70. Residue serine 100 is modified to O-(sn-1-glycerophosphoryl)serine. Cysteine 127 and cysteine 163 are oxidised to a cystine.

It belongs to the N-Me-Phe pilin family. The pili are polar flexible filaments of about 5.4 nanometers diameter and 2.5 micrometers average length; they consist of only a single polypeptide chain arranged in a helical configuration of five subunits per turn in the assembled pilus. Post-translationally, O-linked glycan has been reported to consist either of the Gal(alpha1-3) GlcNAc disaccharide, or the Gal(beta 1-4) Gal(alpha 1-3) 2,4-diacetamido-2,4,6-trideoxyhexose trisaccharide.

The protein localises to the fimbrium. It is found in the membrane. Major component of the type IV pilus (T4P) that plays a role in cellular adherence, microcolony formation as well as twitching motility. This Neisseria meningitidis serogroup B (strain ATCC BAA-335 / MC58) protein is Fimbrial protein (pilE).